A 731-amino-acid chain; its full sequence is E3 ubiquitin-protein ligase COP1 (731 aa).

The interval 1 to 40 (MSGSRQAGSGSAGTSPGSSAASSVTSASSSLSSSPSPPSV) is disordered. The Nuclear localization signal 1 motif lies at 109 to 113 (GSRKR). Residues 136-174 (CPICFDMIEEAYMTKCGHSFCYKCIHQSLEDNNRCPKCN) form an RING-type zinc finger. The Nuclear localization signal 2 motif lies at 195–206 (KQKQRFEEKRFK). Positions 233 to 301 (LDLANVNLML…DIKRVEEMSG (69 aa)) form a coiled coil. The short motif at 235–245 (LANVNLMLELL) is the Nuclear export signal element. The interval 305–325 (PVSEDSTVPQFEAPSPSHSSI) is disordered. WD repeat units follow at residues 419–458 (NGSS…QDAV), 468–508 (TCNS…RSKV), 511–551 (EHEK…SVAS), 553–593 (EAKA…QPIM), 597–635 (GHRK…CLRS), 638–677 (GHIN…TLLT), and 691–729 (RKED…KVLE). The interaction with TRIB1 stretch occupies residues 643 to 645 (KNF).

Belongs to the COP1 family. In terms of assembly, homodimer. Homodimerization is mediated by the coiled coil domain. Component of the DCX DET1-COP1 ubiquitin ligase complex at least composed of RBX1, DET1, DDB1, CUL4A and COP1. Isoform 2 does not interact with CUL4A but still binds to RBX1, suggesting that the interaction may be mediated by another cullin protein. Isoform 1 and isoform 2 interact with CUL5 but not with CUL1, CUL2 not CUL3. Interacts with bZIP transcription factors JUN, JUNB and JUND but not with FOS, ATF2 nor XBP1. Interacts with p53 (TP53). Interacts with COPS6; this interaction stabilizes RFWD2 through reducing its auto-ubiquitination and decelerating its turnover rate. Interacts with SFN; this interaction leads to SFN degradation. Isoform 4 forms heterodimers with isoform 1, preventing its association with DET1. Interacts with p53/TP53 and MTA1. Interacts with TRIB1 (via C-terminus) and TRIB2. Autoubiquitinated. MTA1 destabilizes it by promoting its autoubiquitination. As to expression, ubiquitously expressed at low level. Expressed at higher level in testis, placenta, skeletal muscle and heart.

The protein localises to the nucleus speckle. It is found in the cytoplasm. The enzyme catalyses S-ubiquitinyl-[E2 ubiquitin-conjugating enzyme]-L-cysteine + [acceptor protein]-L-lysine = [E2 ubiquitin-conjugating enzyme]-L-cysteine + N(6)-ubiquitinyl-[acceptor protein]-L-lysine.. Its pathway is protein modification; protein ubiquitination. Its activity is regulated as follows. TRIB1 competes with substrates for RFWD2 binding. E3 ubiquitin-protein ligase that mediates ubiquitination and subsequent proteasomal degradation of target proteins. E3 ubiquitin ligases accept ubiquitin from an E2 ubiquitin-conjugating enzyme in the form of a thioester and then directly transfers the ubiquitin to targeted substrates. Involved in JUN ubiquitination and degradation. Directly involved in p53 (TP53) ubiquitination and degradation, thereby abolishing p53-dependent transcription and apoptosis. Ubiquitinates p53 independently of MDM2 or RCHY1. Probably mediates E3 ubiquitin ligase activity by functioning as the essential RING domain subunit of larger E3 complexes. In contrast, it does not constitute the catalytic RING subunit in the DCX DET1-COP1 complex that negatively regulates JUN, the ubiquitin ligase activity being mediated by RBX1. Involved in 14-3-3 protein sigma/SFN ubiquitination and proteasomal degradation, leading to AKT activation and promotion of cell survival. Ubiquitinates MTA1 leading to its proteasomal degradation. Upon binding to TRIB1, ubiquitinates CEBPA, which lacks a canonical COP1-binding motif. This Homo sapiens (Human) protein is E3 ubiquitin-protein ligase COP1.